The following is a 408-amino-acid chain: Sex comb on midleg-like protein 4 (408 aa).

A phosphoserine mark is found at Ser55 and Ser65. A disordered region spans residues 274–338 (AGGPATTTSG…TRRPSSRNPS (65 aa)). The span at 278 to 287 (ATTTSGSRTN) shows a compositional bias: polar residues. The segment covering 288–306 (PVPSGGSSSPGLRLPASSP) has biased composition (low complexity). Residues 340–406 (WTVEDVVRFV…CYHIDKLKQA (67 aa)) form the SAM domain.

It belongs to the SCM family.

The protein resides in the nucleus. Putative Polycomb group (PcG) protein. PcG proteins act by forming multiprotein complexes, which are required to maintain the transcriptionally repressive state of homeotic genes throughout development. The sequence is that of Sex comb on midleg-like protein 4 (Scml4) from Mus musculus (Mouse).